The sequence spans 100 residues: UPF0045 protein MJ1052 (100 aa).

The protein belongs to the UPF0045 family.

The polypeptide is UPF0045 protein MJ1052 (Methanocaldococcus jannaschii (strain ATCC 43067 / DSM 2661 / JAL-1 / JCM 10045 / NBRC 100440) (Methanococcus jannaschii)).